The sequence spans 256 residues: Proteasome subunit alpha (256 aa).

The interval 235–256 (ELDSNGSDGNGDAPELNGGSSD) is disordered.

Belongs to the peptidase T1A family. The 20S proteasome core is composed of 14 alpha and 14 beta subunits that assemble into four stacked heptameric rings, resulting in a barrel-shaped structure. The two inner rings, each composed of seven catalytic beta subunits, are sandwiched by two outer rings, each composed of seven alpha subunits. The catalytic chamber with the active sites is on the inside of the barrel. Has a gated structure, the ends of the cylinder being occluded by the N-termini of the alpha-subunits. Is capped by the proteasome-associated ATPase, ARC.

It localises to the cytoplasm. Its pathway is protein degradation; proteasomal Pup-dependent pathway. The formation of the proteasomal ATPase ARC-20S proteasome complex, likely via the docking of the C-termini of ARC into the intersubunit pockets in the alpha-rings, may trigger opening of the gate for substrate entry. Interconversion between the open-gate and close-gate conformations leads to a dynamic regulation of the 20S proteasome proteolysis activity. In terms of biological role, component of the proteasome core, a large protease complex with broad specificity involved in protein degradation. This is Proteasome subunit alpha from Mycolicibacterium paratuberculosis (strain ATCC BAA-968 / K-10) (Mycobacterium paratuberculosis).